The sequence spans 185 residues: MVLAKDLKSGMTFLNGEKLLRVMEASHHKPGKGNTIMRMKLKDVRSGSTFDDTYRPEDKFEQAVIETVTAQYLYSMDGIANFMNNETYEQYEIPVEQVKDELLYVLENTDVKIQFYGTEVIGIQLPTTVVLEVTETQPSIKGATVTGSGKPATMETGLVVNVPDFVEAGTKLEINTQTGEYLKRA.

It belongs to the elongation factor P family.

The protein localises to the cytoplasm. It participates in protein biosynthesis; polypeptide chain elongation. Involved in peptide bond synthesis. Stimulates efficient translation and peptide-bond synthesis on native or reconstituted 70S ribosomes in vitro. Probably functions indirectly by altering the affinity of the ribosome for aminoacyl-tRNA, thus increasing their reactivity as acceptors for peptidyl transferase. This is Elongation factor P (efp) from Lactococcus lactis subsp. lactis (strain IL1403) (Streptococcus lactis).